Consider the following 287-residue polypeptide: 4,4'-diapophytoene synthase (287 aa).

(2E,6E)-farnesyl diphosphate contacts are provided by residues 18 to 21 (HSKS), Tyr41, and Arg45. Residues Asp48 and Asp52 each coordinate Mg(2+). Gln165 is a binding site for (2E,6E)-farnesyl diphosphate. Mg(2+) is bound at residue Asn168. Residue Arg171 coordinates (2E,6E)-farnesyl diphosphate. Asp172 contacts Mg(2+). Tyr248 serves as a coordination point for (2E,6E)-farnesyl diphosphate.

Belongs to the phytoene/squalene synthase family. CrtM subfamily. The cofactor is Mg(2+).

The catalysed reaction is 2 (2E,6E)-farnesyl diphosphate = 15-cis-4,4'-diapophytoene + 2 diphosphate. The protein operates within carotenoid biosynthesis; staphyloxanthin biosynthesis; staphyloxanthin from farnesyl diphosphate: step 1/5. Functionally, involved in the biosynthesis of the yellow-orange carotenoid staphyloxanthin, which plays a role in the virulence via its protective function against oxidative stress. Catalyzes the head-to-head condensation of two molecules of farnesyl diphosphate (FPP) into the colorless C(30) carotenoid 4,4'-diapophytoene (dehydrosqualene). In Staphylococcus aureus (strain bovine RF122 / ET3-1), this protein is 4,4'-diapophytoene synthase (crtM).